The following is a 164-amino-acid chain: Large ribosomal subunit protein uL10 (164 aa).

Belongs to the universal ribosomal protein uL10 family. In terms of assembly, part of the ribosomal stalk of the 50S ribosomal subunit. The N-terminus interacts with L11 and the large rRNA to form the base of the stalk. The C-terminus forms an elongated spine to which L12 dimers bind in a sequential fashion forming a multimeric L10(L12)X complex.

Its function is as follows. Forms part of the ribosomal stalk, playing a central role in the interaction of the ribosome with GTP-bound translation factors. This is Large ribosomal subunit protein uL10 from Pseudoalteromonas translucida (strain TAC 125).